We begin with the raw amino-acid sequence, 228 residues long: UPF0173 metal-dependent hydrolase BLi03080/BL00413 (228 aa).

It belongs to the UPF0173 family.

This is UPF0173 metal-dependent hydrolase BLi03080/BL00413 from Bacillus licheniformis (strain ATCC 14580 / DSM 13 / JCM 2505 / CCUG 7422 / NBRC 12200 / NCIMB 9375 / NCTC 10341 / NRRL NRS-1264 / Gibson 46).